Here is a 256-residue protein sequence, read N- to C-terminus: Hydroxyacylglutathione hydrolase (256 aa).

His-57, His-59, Asp-61, His-62, His-115, Asp-134, and His-172 together coordinate Zn(2+).

This sequence belongs to the metallo-beta-lactamase superfamily. Glyoxalase II family. Monomer. Zn(2+) serves as cofactor.

The catalysed reaction is an S-(2-hydroxyacyl)glutathione + H2O = a 2-hydroxy carboxylate + glutathione + H(+). Its pathway is secondary metabolite metabolism; methylglyoxal degradation; (R)-lactate from methylglyoxal: step 2/2. Functionally, thiolesterase that catalyzes the hydrolysis of S-D-lactoyl-glutathione to form glutathione and D-lactic acid. The polypeptide is Hydroxyacylglutathione hydrolase (Rhizobium etli (strain ATCC 51251 / DSM 11541 / JCM 21823 / NBRC 15573 / CFN 42)).